We begin with the raw amino-acid sequence, 87 residues long: HssA/B-like protein 7 (87 aa).

Residues 1–22 (MSILSALTSISNPMKSTKSSVA) are compositionally biased toward polar residues. Residues 1-23 (MSILSALTSISNPMKSTKSSVAN) are disordered.

Belongs to the hssA/B family.

The sequence is that of HssA/B-like protein 7 (hssl7) from Dictyostelium discoideum (Social amoeba).